We begin with the raw amino-acid sequence, 170 residues long: 2S seed storage protein 2 (170 aa).

Positions 1–21 are cleaved as a signal peptide; the sequence is MANKLFLVCATFALCFLLTNA. 2 propeptides span residues 22-37 and 73-88; these read SIYR…DASN and GPSL…DIEN.

It belongs to the 2S seed storage albumins family. As to quaternary structure, the mature protein consists of a small and a large chain linked by disulfide bonds.

In terms of biological role, this is a 2S seed storage protein. This is 2S seed storage protein 2 (AT2S2) from Arabidopsis thaliana (Mouse-ear cress).